We begin with the raw amino-acid sequence, 135 residues long: MGLIVYYSSRSENTHRFVAKLGLRAARIPPSGAAGAFHIREPFVLIVPTYSGDGGKGAVPKQVIRFLNDAENRGHIRGVIAAGNSNFGETYGLAGDVVSQKCQVPYLYRFELLGTEADVANVKHGMERFWTREHL.

Belongs to the NrdI family.

In terms of biological role, probably involved in ribonucleotide reductase function. This Rhizobium johnstonii (strain DSM 114642 / LMG 32736 / 3841) (Rhizobium leguminosarum bv. viciae) protein is Protein NrdI.